Reading from the N-terminus, the 192-residue chain is Probable apo-citrate lyase phosphoribosyl-dephospho-CoA transferase (192 aa).

The protein belongs to the CitX family.

The catalysed reaction is apo-[citrate lyase ACP] + 2'-(5''-triphospho-alpha-D-ribosyl)-3'-dephospho-CoA = holo-[citrate lyase ACP] + diphosphate. Functionally, transfers 2-(5''-triphosphoribosyl)-3'-dephosphocoenzyme-A on a serine residue to the apo-acyl carrier protein (gamma chain) of the citrate lyase to yield holo-acyl carrier protein. This Streptococcus pyogenes serotype M3 (strain ATCC BAA-595 / MGAS315) protein is Probable apo-citrate lyase phosphoribosyl-dephospho-CoA transferase.